A 90-amino-acid chain; its full sequence is [Leu8]-phyllolitorin (90 aa).

Residues 1–30 form the signal peptide; it reads MSAVPFTRVLLISGFLAHLLLSTFVTLTVC. A propeptide spanning residues 31–48 is cleaved from the precursor; the sequence is KEVTEESDDLSKRNVLQR. Glutamine 49 is modified (pyrrolidone carboxylic acid). Methionine 57 carries the methionine amide modification. A propeptide spanning residues 61–90 is cleaved from the precursor; that stretch reads SLENTNRRSDEDMEISALFRGSPLKVKRSD.

The protein belongs to the bombesin/neuromedin-B/ranatensin family. In terms of tissue distribution, expressed by the skin glands.

The protein localises to the secreted. This chain is [Leu8]-phyllolitorin, found in Phyllomedusa sauvagei (Sauvage's leaf frog).